A 354-amino-acid polypeptide reads, in one-letter code: MEKFKAAMLLAGTGDALGYKNFSWVFCASGVKIQEELKQLGGLENLVLSIDGWPVSNNTLMHIATAESLVSDYWSIEDLYRDMVKRYIDVVDKLQGRRPDPATIEGCAHLKPDNYLLAWHTPFNEKGSGFGAATKAMCIGMRYWKPGRLETLIEVSIESGRMTHNHPTGFLGSLCTALFTSYAIQEKPLAQWGREMLKLLPMAEEYCKKTIRHMAEYQEHWFYFEAKWQFYLEEREIAEENENKPKFPDKYDAEERDKAYKTWSSEGRGGRRGHDAPMIAYDALLGAGGDWKELCNRAMFHGGEGGATGSIAGCLYGLLYGISKVPKSLYQQLEMKERLENLGEKLYHLATMEK.

It belongs to the ADP-ribosylglycohydrolase family. As to expression, expressed in heart (at protein level). A short form is detected in both heart and tadpole tail (at protein level).

Its subcellular location is the cytoplasm. It localises to the myofibril. The protein resides in the sarcomere. Functionally, required for myofibril assembly and outgrowth of the cardiac chambers in the developing heart. Appears to be catalytically inactive, showing no activity against O-acetyl-ADP-ribose. The sequence is that of Inactive ADP-ribosyltransferase arh2 (adprhl1) from Xenopus laevis (African clawed frog).